The chain runs to 353 residues: MTMAVPSRARVYADVNSQRPREYWDYESYVVDWGNQEDYQLVRKLGRGKYSEVFEAINITNNEKCVVKILKPVKKKKIKREIKILENLRGGTNIITLQAVVKDPVSRTPALIFEHVNNTDFKQLYQTLSDYDIRYYLYELLKALDYCHSMGIMHRDVKPHNVMIDHDHRKLRLIDWGLAEFYHPGQDYNVRVASRYFKGPELLVDYQMYDYSLDMWSLGCMLASMIFRKEPFFHGHDNYDQLVRIAKVLGTEELFEYLDKYHIELDPRFNDILGRHSRKRWERFVHSENQHLVSPEALDFLDRLLRYDHYERYTAREAMDHPYFYPIVKEQGRMVSSNSPTPNALQGPISTTE.

One can recognise a Protein kinase domain in the interval 39–324 (YQLVRKLGRG…AREAMDHPYF (286 aa)). Residues 45 to 53 (LGRGKYSEV) and K68 contribute to the ATP site. D156 (proton acceptor) is an active-site residue. The interval 334–353 (MVSSNSPTPNALQGPISTTE) is disordered.

This sequence belongs to the protein kinase superfamily. Ser/Thr protein kinase family. CK2 subfamily. In terms of assembly, tetramer of two alpha and two beta chains.

The enzyme catalyses L-seryl-[protein] + ATP = O-phospho-L-seryl-[protein] + ADP + H(+). The catalysed reaction is L-threonyl-[protein] + ATP = O-phospho-L-threonyl-[protein] + ADP + H(+). Casein kinases are operationally defined by their preferential utilization of acidic proteins such as caseins as substrates. The alpha chain contains the catalytic site. May participate in Wnt signaling. In Spodoptera frugiperda (Fall armyworm), this protein is Casein kinase II subunit alpha.